Reading from the N-terminus, the 431-residue chain is Trigger factor (431 aa).

Positions 158 to 243 (GDLVAVETWS…VAEVSEPVVP (86 aa)) constitute a PPIase FKBP-type domain.

This sequence belongs to the FKBP-type PPIase family. Tig subfamily.

The protein resides in the cytoplasm. The catalysed reaction is [protein]-peptidylproline (omega=180) = [protein]-peptidylproline (omega=0). Its function is as follows. Involved in protein export. Acts as a chaperone by maintaining the newly synthesized protein in an open conformation. Functions as a peptidyl-prolyl cis-trans isomerase. The sequence is that of Trigger factor from Stenotrophomonas maltophilia (strain K279a).